Consider the following 500-residue polypeptide: Cytochrome P450 monooxygenase ausR (500 aa).

A helical membrane pass occupies residues 15–35; sequence GVGLYILWTVAVLFVIFKLLA. Cysteine 439 is a heme binding site.

This sequence belongs to the cytochrome P450 family. Heme serves as cofactor.

It localises to the membrane. The protein operates within secondary metabolite biosynthesis; terpenoid biosynthesis. Functionally, cytochrome P450 monooxygenase; part of the gene cluster that mediates the biosynthesis of calidodehydroaustin, a fungal meroterpenoid. The first step of the pathway is the synthesis of 3,5-dimethylorsellinic acid by the polyketide synthase ausA. 3,5-dimethylorsellinic acid is then prenylated by the polyprenyl transferase ausN. Further epoxidation by the FAD-dependent monooxygenase ausM and cyclization by the probable terpene cyclase ausL lead to the formation of protoaustinoid A. Protoaustinoid A is then oxidized to spiro-lactone preaustinoid A3 by the combined action of the FAD-binding monooxygenases ausB and ausC, and the dioxygenase ausE. Acid-catalyzed keto-rearrangement and ring contraction of the tetraketide portion of preaustinoid A3 by ausJ lead to the formation of preaustinoid A4. The aldo-keto reductase ausK, with the help of ausH, is involved in the next step by transforming preaustinoid A4 into isoaustinone which is in turn hydroxylated by the P450 monooxygenase ausI to form austinolide. The cytochrome P450 monooxygenase ausG modifies austinolide to austinol. Austinol is further acetylated to austin by the O-acetyltransferase ausP, which spontaneously changes to dehydroaustin. The cytochrome P450 monooxygenase ausR then converts dehydroaustin is into 7-dehydrodehydroaustin. The hydroxylation catalyzed by ausR permits the O-acetyltransferase ausQ to add an additional acetyl group to the molecule, leading to the formation of acetoxydehydroaustin. The short chain dehydrogenase ausT catalyzes the reduction of the double bond present between carbon atoms 1 and 2 to convert 7-dehydrodehydroaustin into 1,2-dihydro-7-hydroxydehydroaustin. AusQ catalyzes not only an acetylation reaction but also the addition of the PKS ausV diketide product to 1,2-dihydro-7-hydroxydehydroaustin, forming precalidodehydroaustin. Finally, the iron/alpha-ketoglutarate-dependent dioxygenase converts precalidodehydroaustin into calidodehydroaustin. The polypeptide is Cytochrome P450 monooxygenase ausR (Aspergillus calidoustus).